The sequence spans 348 residues: Phenylalanine--tRNA ligase alpha subunit (348 aa).

Glu-259 provides a ligand contact to Mg(2+).

The protein belongs to the class-II aminoacyl-tRNA synthetase family. Phe-tRNA synthetase alpha subunit type 1 subfamily. In terms of assembly, tetramer of two alpha and two beta subunits. It depends on Mg(2+) as a cofactor.

It localises to the cytoplasm. It carries out the reaction tRNA(Phe) + L-phenylalanine + ATP = L-phenylalanyl-tRNA(Phe) + AMP + diphosphate + H(+). This chain is Phenylalanine--tRNA ligase alpha subunit, found in Latilactobacillus sakei subsp. sakei (strain 23K) (Lactobacillus sakei subsp. sakei).